The following is a 140-amino-acid chain: Large ribosomal subunit protein uL14 (140 aa).

The protein belongs to the universal ribosomal protein uL14 family.

The chain is Large ribosomal subunit protein uL14 (RPL23) from Nicotiana tabacum (Common tobacco).